The chain runs to 366 residues: Alanine racemase (366 aa).

Lys40 serves as the catalytic Proton acceptor; specific for D-alanine. An N6-(pyridoxal phosphate)lysine modification is found at Lys40. Residue Arg136 coordinates substrate. The active-site Proton acceptor; specific for L-alanine is the Tyr263. Residue Met310 participates in substrate binding.

Belongs to the alanine racemase family. The cofactor is pyridoxal 5'-phosphate.

The enzyme catalyses L-alanine = D-alanine. Its pathway is amino-acid biosynthesis; D-alanine biosynthesis; D-alanine from L-alanine: step 1/1. In terms of biological role, catalyzes the interconversion of L-alanine and D-alanine. May also act on other amino acids. The sequence is that of Alanine racemase (alr) from Streptococcus pyogenes serotype M28 (strain MGAS6180).